Here is a 333-residue protein sequence, read N- to C-terminus: Quinolinate synthase (333 aa).

Residues His41 and Ser58 each contribute to the iminosuccinate site. Cys103 is a binding site for [4Fe-4S] cluster. Iminosuccinate contacts are provided by residues 129-131 (YIN) and Ser146. Position 189 (Cys189) interacts with [4Fe-4S] cluster. Residues 215-217 (HPE) and Thr232 contribute to the iminosuccinate site. Residue Cys282 coordinates [4Fe-4S] cluster.

Belongs to the quinolinate synthase family. Type 2 subfamily. [4Fe-4S] cluster is required as a cofactor.

It localises to the cytoplasm. The catalysed reaction is iminosuccinate + dihydroxyacetone phosphate = quinolinate + phosphate + 2 H2O + H(+). It participates in cofactor biosynthesis; NAD(+) biosynthesis; quinolinate from iminoaspartate: step 1/1. Functionally, catalyzes the condensation of iminoaspartate with dihydroxyacetone phosphate to form quinolinate. The polypeptide is Quinolinate synthase (Prochlorococcus marinus (strain MIT 9303)).